A 236-amino-acid polypeptide reads, in one-letter code: MSCRAMVSPPSRTARAGAVLASSPFVTSQPTEELLREFETVYGAVELTHLTPPQSPPGPATQLLLSYAQQAQCTALAPPAPLAPPQEAWQIVAPVPVNQLPEGYECDLDAVEELVRHRASQLASPQHSSSSANASPRSSPPPSPRSSSTDEDWSAPSRLKTRPVDDRRSRKKEQNKNAATRYRQKKKAEVEVLLKEEQTLRQRHTELGEKCSDLQREIRYLKALMRDLFKAKGLIK.

Residues 117–185 (HRASQLASPQ…KNAATRYRQK (69 aa)) are disordered. Positions 120–137 (SQLASPQHSSSSANASPR) are enriched in low complexity. Positions 162–175 (RPVDDRRSRKKEQN) are enriched in basic and acidic residues. One can recognise a bZIP domain in the interval 165–228 (DDRRSRKKEQ…RYLKALMRDL (64 aa)). Residues 167-187 (RRSRKKEQNKNAATRYRQKKK) form a basic motif region. Residues 193–228 (LLKEEQTLRQRHTELGEKCSDLQREIRYLKALMRDL) are leucine-zipper.

This sequence belongs to the bZIP family. As to quaternary structure, binds DNA as a dimer.

It is found in the nucleus. Transcriptional activator that acts in the unfolded protein response (UPR) pathway. Acts during endoplasmic reticulum (ER) stress by activating UPR target genes via direct binding to the UPR element (UPRE) (5'-GGAACTGGACAGCGTGTCGAAA-3'). Activates expression of ER chaperones ERP72 and PDI. This chain is Activating transcription factor of chaperone, found in Bombyx mori (Silk moth).